The following is a 149-amino-acid chain: ER export of PMA1 protein 1 (149 aa).

The Lumenal segment spans residues 1–6 (MNLYGY). Residues 7–27 (FLLLIIVIAFIALLPLFSGIG) traverse the membrane as a helical; Signal-anchor for type II membrane protein segment. The Cytoplasmic segment spans residues 28–149 (TFKLTKPKSS…KKNEAYEGFV (122 aa)).

As to quaternary structure, interacts with PMA1 and PSG1.

The protein resides in the endoplasmic reticulum membrane. It localises to the cytoplasmic vesicle. Its subcellular location is the COPI-coated vesicle membrane. It is found in the COPII-coated vesicle membrane. The protein localises to the golgi apparatus membrane. In terms of biological role, specific cargo receptor protein for the plasma membrane ATPase PMA1 that acts with PSG1 to promote the transport and maturation of PMA1. EXP1 and PSG1 probably act sequentially to promote PMA1 sorting between the ER and the Golgi, with EXP1 promoting PMA1 export from the ER to the Golgi while PSG1 has a role in PMA1 maturation or quality control in the Golgi. The sequence is that of ER export of PMA1 protein 1 from Saccharomyces cerevisiae (strain ATCC 204508 / S288c) (Baker's yeast).